The chain runs to 954 residues: Glycine dehydrogenase (decarboxylating) (954 aa).

Position 701 is an N6-(pyridoxal phosphate)lysine (K701).

Belongs to the GcvP family. As to quaternary structure, the glycine cleavage system is composed of four proteins: P, T, L and H. Pyridoxal 5'-phosphate serves as cofactor.

The enzyme catalyses N(6)-[(R)-lipoyl]-L-lysyl-[glycine-cleavage complex H protein] + glycine + H(+) = N(6)-[(R)-S(8)-aminomethyldihydrolipoyl]-L-lysyl-[glycine-cleavage complex H protein] + CO2. Its function is as follows. The glycine cleavage system catalyzes the degradation of glycine. The P protein binds the alpha-amino group of glycine through its pyridoxal phosphate cofactor; CO(2) is released and the remaining methylamine moiety is then transferred to the lipoamide cofactor of the H protein. The polypeptide is Glycine dehydrogenase (decarboxylating) (Bordetella pertussis (strain Tohama I / ATCC BAA-589 / NCTC 13251)).